A 78-amino-acid chain; its full sequence is Structural DNA-binding protein p10 (78 aa).

A compositionally biased stretch (low complexity) spans 1 to 27 (MPTKAGTKSTANKKTTKGSSKSGSSRG). The disordered stretch occupies residues 1-41 (MPTKAGTKSTANKKTTKGSSKSGSSRGHTGKTHASSSMHSG).

This sequence belongs to the asfivirus P10 family.

Its subcellular location is the virion. Its function is as follows. May play a role in genome packaging through direct interaction with viral DNA. Binds to ssDNA and dsDNA with the same apparent affinity in vitro. This African swine fever virus (strain Badajoz 1971 Vero-adapted) (Ba71V) protein is Structural DNA-binding protein p10.